The chain runs to 379 residues: Bifunctional enzyme IspD/IspF (379 aa).

Residues 1–213 (MSQVSLVVMG…QGFEPPFGGC (213 aa)) form a 2-C-methyl-D-erythritol 4-phosphate cytidylyltransferase region. Residues 214 to 379 (YGGSGFDVHA…DWTKHACFNR (166 aa)) are 2-C-methyl-D-erythritol 2,4-cyclodiphosphate synthase. A divalent metal cation is bound by residues Asp220 and His222. 4-CDP-2-C-methyl-D-erythritol 2-phosphate-binding positions include 220-222 (DVH) and 246-247 (HS). Position 254 (His254) interacts with a divalent metal cation. 4-CDP-2-C-methyl-D-erythritol 2-phosphate-binding positions include 268 to 270 (DIG), 273 to 277 (FPDSD), 344 to 347 (TTTE), Phe351, and Arg354.

This sequence in the N-terminal section; belongs to the IspD/TarI cytidylyltransferase family. IspD subfamily. The protein in the C-terminal section; belongs to the IspF family. A divalent metal cation is required as a cofactor.

The enzyme catalyses 2-C-methyl-D-erythritol 4-phosphate + CTP + H(+) = 4-CDP-2-C-methyl-D-erythritol + diphosphate. It catalyses the reaction 4-CDP-2-C-methyl-D-erythritol 2-phosphate = 2-C-methyl-D-erythritol 2,4-cyclic diphosphate + CMP. Its pathway is isoprenoid biosynthesis; isopentenyl diphosphate biosynthesis via DXP pathway; isopentenyl diphosphate from 1-deoxy-D-xylulose 5-phosphate: step 2/6. It participates in isoprenoid biosynthesis; isopentenyl diphosphate biosynthesis via DXP pathway; isopentenyl diphosphate from 1-deoxy-D-xylulose 5-phosphate: step 4/6. Bifunctional enzyme that catalyzes the formation of 4-diphosphocytidyl-2-C-methyl-D-erythritol from CTP and 2-C-methyl-D-erythritol 4-phosphate (MEP) (IspD), and catalyzes the conversion of 4-diphosphocytidyl-2-C-methyl-D-erythritol 2-phosphate (CDP-ME2P) to 2-C-methyl-D-erythritol 2,4-cyclodiphosphate (ME-CPP) with a corresponding release of cytidine 5-monophosphate (CMP) (IspF). The protein is Bifunctional enzyme IspD/IspF of Wolinella succinogenes (strain ATCC 29543 / DSM 1740 / CCUG 13145 / JCM 31913 / LMG 7466 / NCTC 11488 / FDC 602W) (Vibrio succinogenes).